Reading from the N-terminus, the 379-residue chain is MSSEVSKTVTVPIDLGNHSYKIDIGAGLYQQAVSILTPYVRNRRFIVITDENVARCQLPEFEKSFHEAGVTVDSIILPAGEATKSWHHLAELCDQLIRRGVERRDAIIALGGGVIGDLVGFAAAILKRGCQFIQIPTSLLAQVDSSVGGKTAINCEAGKNLIGAFHQPVFVLIDPDALQTLPARQLRAGYGEIIKYGLIDDPDFFAWCEEHGAALIEGDKASRLYAIEHSIRAKALIVADDEKEISGKRALLNLGHTFGHALEADTGFSDKLFHGEAVAAGSALAFGFSYVKNLASKEDIQRIIKHLRETGLPASLEEAGVKASGKELVAHMMHDKKMEAGRLPFLLARGIGKSFLDKEVNLEEIAAFLDSPLARKGTI.

NAD(+) is bound by residues 113–117 (GVIGD), 137–138 (TS), Lys150, and Lys159. Zn(2+) is bound by residues Glu192, His256, and His274.

Belongs to the sugar phosphate cyclases superfamily. Dehydroquinate synthase family. Co(2+) is required as a cofactor. Zn(2+) serves as cofactor. The cofactor is NAD(+).

Its subcellular location is the cytoplasm. It catalyses the reaction 7-phospho-2-dehydro-3-deoxy-D-arabino-heptonate = 3-dehydroquinate + phosphate. It functions in the pathway metabolic intermediate biosynthesis; chorismate biosynthesis; chorismate from D-erythrose 4-phosphate and phosphoenolpyruvate: step 2/7. Functionally, catalyzes the conversion of 3-deoxy-D-arabino-heptulosonate 7-phosphate (DAHP) to dehydroquinate (DHQ). The chain is 3-dehydroquinate synthase from Zymomonas mobilis subsp. mobilis (strain ATCC 31821 / ZM4 / CP4).